Here is a 541-residue protein sequence, read N- to C-terminus: Chaperonin GroEL (541 aa).

Residues 29–32 (TAGP), K50, 86–90 (DGTTT), G416, and D498 contribute to the ATP site.

Belongs to the chaperonin (HSP60) family. In terms of assembly, forms a cylinder of 14 subunits composed of two heptameric rings stacked back-to-back. Interacts with the co-chaperonin GroES.

It is found in the cytoplasm. It catalyses the reaction ATP + H2O + a folded polypeptide = ADP + phosphate + an unfolded polypeptide.. In terms of biological role, together with its co-chaperonin GroES, plays an essential role in assisting protein folding. The GroEL-GroES system forms a nano-cage that allows encapsulation of the non-native substrate proteins and provides a physical environment optimized to promote and accelerate protein folding. The protein is Chaperonin GroEL of Anaplasma phagocytophilum (Ehrlichia phagocytophila).